We begin with the raw amino-acid sequence, 991 residues long: 5'-3' exoribonuclease 2 (991 aa).

Positions 264-268 (TKKTK) match the Nuclear localization signal motif. A compositionally biased stretch (basic and acidic residues) spans 404–418 (RRNENYRRRQQRESN). Disordered regions lie at residues 404–461 (RRNE…TQKI), 547–582 (SIESSTPVVHPIDTKVSNVGQKRKAPDSTEENENTD), and 872–991 (AERS…NGYY). Over residues 433 to 452 (SVETQSTEVVTSSKSTSVDT) the composition is skewed to low complexity. Low complexity-rich tracts occupy residues 878–889 (SRRNNGNSYRGG) and 896–910 (RRSYQSQSYSSRQSY). Residues 926–938 (WSGNGNFPRSNAS) are compositionally biased toward polar residues. Residues 946-958 (EGYGGRSRGGGYS) are compositionally biased toward gly residues. Residues 980 to 991 (ESYNNNNRNGYY) show a composition bias toward polar residues.

Belongs to the 5'-3' exonuclease family. XRN2/RAT1 subfamily. In terms of assembly, interacts with din1/rai1; the interaction is direct, stabilizes dhp1 protein structure and may stimulate its exoribonuclease activity. The interaction also stimulates din1 pyrophosphohydrolase activity, probably by recruiting it to mRNA substrates.

The protein localises to the nucleus. Functionally, possesses 5'-&gt;3' exoribonuclease activity. Required for the processing of nuclear mRNA and rRNA precursors. May promote the termination of transcription by RNA polymerase II. Essential for vegetative cell growth and chromosome segregation. The sequence is that of 5'-3' exoribonuclease 2 (dhp1) from Schizosaccharomyces pombe (strain 972 / ATCC 24843) (Fission yeast).